The sequence spans 168 residues: Large ribosomal subunit protein uL10 (168 aa).

Belongs to the universal ribosomal protein uL10 family. Part of the ribosomal stalk of the 50S ribosomal subunit. The N-terminus interacts with L11 and the large rRNA to form the base of the stalk. The C-terminus forms an elongated spine to which L12 dimers bind in a sequential fashion forming a multimeric L10(L12)X complex.

Functionally, forms part of the ribosomal stalk, playing a central role in the interaction of the ribosome with GTP-bound translation factors. This is Large ribosomal subunit protein uL10 from Ralstonia nicotianae (strain ATCC BAA-1114 / GMI1000) (Ralstonia solanacearum).